We begin with the raw amino-acid sequence, 209 residues long: uncharacterized protein (209 aa).

Residues 1–17 (MKRLVTGLLALSLFLAA) form the signal peptide. The tract at residues 17–105 (ACGQDSDQQK…SNNQANNNQK (89 aa)) is disordered. Cysteine 18 carries N-palmitoyl cysteine lipidation. Cysteine 18 carries the S-diacylglycerol cysteine lipid modification. Basic and acidic residues predominate over residues 23–70 (DQQKDGNKEKDDKAKTEQQDKKTNDSSKDKKDNKDDSKDVNKDNKDNS). Residues 71-105 (ANDNQQQSNSNATNNDQNQTNNNQSSNNQANNNQK) show a composition bias toward low complexity.

It is found in the cell membrane. This is an uncharacterized protein from Staphylococcus aureus (strain COL).